The primary structure comprises 139 residues: D-ribose pyranase (139 aa).

Histidine 20 serves as the catalytic Proton donor. Residues aspartate 28, histidine 106, and 128-130 each bind substrate; that span reads YAN.

Belongs to the RbsD / FucU family. RbsD subfamily. As to quaternary structure, homodecamer.

The protein localises to the cytoplasm. It catalyses the reaction beta-D-ribopyranose = beta-D-ribofuranose. It functions in the pathway carbohydrate metabolism; D-ribose degradation; D-ribose 5-phosphate from beta-D-ribopyranose: step 1/2. Functionally, catalyzes the interconversion of beta-pyran and beta-furan forms of D-ribose. The sequence is that of D-ribose pyranase from Vibrio vulnificus (strain CMCP6).